The following is a 308-amino-acid chain: MKIPMILGATAVGKTQFLVKLASLIPIEVVSVDSRQIYRYMDIGTAKPTREELSKLKHHVIDVVDPDEDFNVFEYRKIALKAMDEIVKKGRIPVFAGGSGLYAETLMKGIVENVPRNDKVREALKTLEVNAPGSLRKLLEKVDHEAYEKIHPNDLKRTIRYLEVFFTTGKTLTSLQKIHKCSNQFTVIILERDRRELAERIENRVDKMVESGLIEEVVRLKEMGYTRELNSQQTIGYAEIWSYLEGEVTLERATELIKRNTRRFARRQIIWFRRYKDAKRISLSETNENDILSLLKEDILNVWGGKYG.

An ATP-binding site is contributed by 8-15; sequence GATAVGKT. 10 to 15 is a binding site for substrate; the sequence is TAVGKT. Residues 33-36 are interaction with substrate tRNA; that stretch reads DSRQ.

Belongs to the IPP transferase family. As to quaternary structure, monomer. The cofactor is Mg(2+).

The enzyme catalyses adenosine(37) in tRNA + dimethylallyl diphosphate = N(6)-dimethylallyladenosine(37) in tRNA + diphosphate. In terms of biological role, catalyzes the transfer of a dimethylallyl group onto the adenine at position 37 in tRNAs that read codons beginning with uridine, leading to the formation of N6-(dimethylallyl)adenosine (i(6)A). The protein is tRNA dimethylallyltransferase of Kosmotoga olearia (strain ATCC BAA-1733 / DSM 21960 / TBF 19.5.1).